Here is a 98-residue protein sequence, read N- to C-terminus: uncharacterized protein (98 aa).

The next 2 helical transmembrane spans lie at 13 to 33 (LFSL…IAIF) and 65 to 85 (IMVI…IFIS).

Its subcellular location is the membrane. This is an uncharacterized protein from Saccharomyces cerevisiae (strain ATCC 204508 / S288c) (Baker's yeast).